The sequence spans 115 residues: U3-lycotoxin-Ls1a (115 aa).

Residues 1 to 20 (MKFVLLFGVLLVTLFSYSSA) form the signal peptide. Residues 21–44 (EMLDDFDQADEEELLSLIEKEEAR) constitute a propeptide that is removed on maturation. 4 disulfide bridges follow: Cys-48–Cys-63, Cys-55–Cys-72, Cys-62–Cys-87, and Cys-74–Cys-85.

This sequence belongs to the neurotoxin 19 (CSTX) family. 01 subfamily. In terms of tissue distribution, expressed by the venom gland.

It localises to the secreted. The protein is U3-lycotoxin-Ls1a of Lycosa singoriensis (Wolf spider).